Reading from the N-terminus, the 511-residue chain is Bifunctional purine biosynthesis protein PurH (511 aa).

The region spanning 1-145 (MKKRALVSVS…KNHKFVSVIV (145 aa)) is the MGS-like domain.

The protein belongs to the PurH family.

It carries out the reaction (6R)-10-formyltetrahydrofolate + 5-amino-1-(5-phospho-beta-D-ribosyl)imidazole-4-carboxamide = 5-formamido-1-(5-phospho-D-ribosyl)imidazole-4-carboxamide + (6S)-5,6,7,8-tetrahydrofolate. The catalysed reaction is IMP + H2O = 5-formamido-1-(5-phospho-D-ribosyl)imidazole-4-carboxamide. Its pathway is purine metabolism; IMP biosynthesis via de novo pathway; 5-formamido-1-(5-phospho-D-ribosyl)imidazole-4-carboxamide from 5-amino-1-(5-phospho-D-ribosyl)imidazole-4-carboxamide (10-formyl THF route): step 1/1. It participates in purine metabolism; IMP biosynthesis via de novo pathway; IMP from 5-formamido-1-(5-phospho-D-ribosyl)imidazole-4-carboxamide: step 1/1. This Bacillus cereus (strain B4264) protein is Bifunctional purine biosynthesis protein PurH.